Here is a 479-residue protein sequence, read N- to C-terminus: Ribulose bisphosphate carboxylase large chain (479 aa).

The propeptide occupies 1 to 2; that stretch reads MS. Asn-123 and Thr-173 together coordinate substrate. The active-site Proton acceptor is Lys-175. Residue Lys-177 coordinates substrate. 3 residues coordinate Mg(2+): Lys-201, Asp-203, and Glu-204. Lys-201 carries the N6-carboxylysine modification. Ser-208 bears the Phosphoserine mark. The active-site Proton acceptor is the His-294. Substrate contacts are provided by Arg-295 and His-327. Residue Thr-330 is modified to Phosphothreonine. Residue Ser-379 coordinates substrate.

Belongs to the RuBisCO large chain family. Type I subfamily. As to quaternary structure, heterohexadecamer of 8 large chains and 8 small chains; disulfide-linked. The disulfide link is formed within the large subunit homodimers. Mg(2+) is required as a cofactor. The disulfide bond which can form in the large chain dimeric partners within the hexadecamer appears to be associated with oxidative stress and protein turnover.

It is found in the plastid. The protein resides in the chloroplast. It carries out the reaction 2 (2R)-3-phosphoglycerate + 2 H(+) = D-ribulose 1,5-bisphosphate + CO2 + H2O. The catalysed reaction is D-ribulose 1,5-bisphosphate + O2 = 2-phosphoglycolate + (2R)-3-phosphoglycerate + 2 H(+). Functionally, ruBisCO catalyzes two reactions: the carboxylation of D-ribulose 1,5-bisphosphate, the primary event in carbon dioxide fixation, as well as the oxidative fragmentation of the pentose substrate in the photorespiration process. Both reactions occur simultaneously and in competition at the same active site. The polypeptide is Ribulose bisphosphate carboxylase large chain (Arabis hirsuta (Hairy rock-cress)).